The chain runs to 156 residues: Zinc metalloproteinase-disintegrin jararin (156 aa).

Positions 1-67 (FVANRMAHEL…NYYGCLLNEP (67 aa)) constitute a Peptidase M12B domain. His8 contributes to the Zn(2+) binding site. Residue Glu9 is part of the active site. Residue His12 coordinates Zn(2+). Disulfide bonds link Cys23–Cys47, Cys25–Cys30, Cys78–Cys97, Cys89–Cys107, Cys91–Cys102, Cys101–Cys124, Cys115–Cys121, Cys120–Cys145, and Cys133–Cys152. The Disintegrin domain occupies 75 to 156 (PPFCGNYYPE…GQSGDCPRNS (82 aa)). Residues 136 to 145 (GRGDNPDDRC) show a composition bias toward basic and acidic residues. The interval 136 to 156 (GRGDNPDDRCTGQSGDCPRNS) is disordered. Positions 137 to 139 (RGD) match the Cell attachment site motif. Positions 146-156 (TGQSGDCPRNS) are enriched in polar residues.

This sequence belongs to the venom metalloproteinase (M12B) family. P-II subfamily. P-IIb sub-subfamily. Monomer. Zn(2+) is required as a cofactor. Expressed by the venom gland.

The protein localises to the secreted. Its function is as follows. Snake venom zinc metalloproteinase that inhibits ADP-induced platelet aggregation (probably by binding integrin alpha-IIb/beta-3 (ITGA2B/ITGB3)) and degrades fibrinogen. This Bothrops jararaca (Jararaca) protein is Zinc metalloproteinase-disintegrin jararin.